Consider the following 336-residue polypeptide: Inositol 2-dehydrogenase (336 aa).

This sequence belongs to the Gfo/Idh/MocA family. As to quaternary structure, homotetramer.

It catalyses the reaction myo-inositol + NAD(+) = scyllo-inosose + NADH + H(+). In terms of biological role, involved in the oxidation of myo-inositol (MI) to 2-keto-myo-inositol (2KMI or 2-inosose). The chain is Inositol 2-dehydrogenase from Pseudomonas fluorescens (strain SBW25).